Reading from the N-terminus, the 261-residue chain is 5'-nucleotidase SurE (261 aa).

Residues D12, D13, S43, and N99 each coordinate a divalent metal cation.

This sequence belongs to the SurE nucleotidase family. A divalent metal cation serves as cofactor.

It is found in the cytoplasm. It catalyses the reaction a ribonucleoside 5'-phosphate + H2O = a ribonucleoside + phosphate. Nucleotidase that shows phosphatase activity on nucleoside 5'-monophosphates. The chain is 5'-nucleotidase SurE from Polynucleobacter asymbioticus (strain DSM 18221 / CIP 109841 / QLW-P1DMWA-1) (Polynucleobacter necessarius subsp. asymbioticus).